We begin with the raw amino-acid sequence, 244 residues long: CTD nuclear envelope phosphatase 1 (244 aa).

The helical transmembrane segment at 7–29 threads the bilayer; it reads LLGLRGFVAFAAKLWSFVLYLLR. An FCP1 homology domain is found at 57 to 224; it reads SQVKRKVLVL…LNLLPMLDAL (168 aa).

It belongs to the dullard family. In terms of assembly, interacts with bmpr1a, bmpr1b and bmpr2.

It localises to the membrane. The protein resides in the cytoplasm. Its subcellular location is the perinuclear region. It catalyses the reaction O-phospho-L-seryl-[protein] + H2O = L-seryl-[protein] + phosphate. The enzyme catalyses O-phospho-L-threonyl-[protein] + H2O = L-threonyl-[protein] + phosphate. Its function is as follows. Serine/threonine protein phosphatase that may dephosphorylate and activate lipins. Lipins are phosphatidate phosphatases that catalyze the conversion of phosphatidic acid to diacylglycerol and control the metabolism of fatty acids at different levels. May indirectly modulate the lipid composition of nuclear and/or endoplasmic reticulum membranes and be required for proper nuclear membrane morphology and/or dynamics. May also indirectly regulate the production of lipid droplets and triacylglycerol. Induces neuronal differentiation by antagonizing BMP signaling. Acts both by dephosphorylating BMPR1A and by promoting BMPR2 proteasomal degradation. The protein is CTD nuclear envelope phosphatase 1 (ctdnep1) of Xenopus tropicalis (Western clawed frog).